The sequence spans 464 residues: MMARRDPKSWAKRLVRAQTLQKQRRAPVGPSAPPPDEEDPRLKCKNCGAFGHTARSTRCPMKCWKAALVPATLGKKEGKENLKPWKPRGEANPGPLNKDKGEKEERPRQQDPQRKALLHMFSGKPPEKPLPNGKGSTESSDHLRVASGPMPVHTTSKRPRVDPVLADRSAAEMSGRGSVLASLSPLRKASLSSSSSLGPKERQTGAAADIPQPAVRHQGREPLLVVKPTHSRPEGGCREVPQAASKTHGLLQAARPQAQDKRPAVTSQPCPPAATHSLGLGSNLSFGPGAKRPAQAPIQACLNFPKKPRLGPFQIPESAIQGGELGAPENLQPPPAATELGPSTSPQMGRRTPAQVPSIDRQPPHSTPCLPTAQACTMSHHSAASHDGAQPLRVLFRRLENGRWSSSLLAAPSFHSPEKPGAFLAQSPHVSEKSEAPCVRVPPSVLYEDLQVSSSSEDSDSDLE.

Disordered stretches follow at residues 1-42 (MMAR…DPRL), 69-389 (VPAT…HDGA), and 415-437 (HSPEKPGAFLAQSPHVSEKSEAP). Basic and acidic residues-rich tracts occupy residues 74–89 (GKKEGKENLKPWKPRG) and 97–114 (NKDKGEKEERPRQQDPQR). Residues 180–197 (LASLSPLRKASLSSSSSL) show a composition bias toward low complexity.

Belongs to the FAM90 family.

The sequence is that of Protein FAM90A8 (FAM90A8) from Homo sapiens (Human).